A 384-amino-acid polypeptide reads, in one-letter code: Lipid-A-disaccharide synthase (384 aa).

It belongs to the LpxB family.

It catalyses the reaction 2-N,3-O-bis[(3R)-3-hydroxytetradecanoyl]-alpha-D-glucosaminyl 1-phosphate + UDP-2-N,3-O-bis[(3R)-3-hydroxytetradecanoyl]-alpha-D-glucosamine = lipid A disaccharide (E. coli) + UDP + H(+). It carries out the reaction a lipid X + a UDP-2-N,3-O-bis[(3R)-3-hydroxyacyl]-alpha-D-glucosamine = a lipid A disaccharide + UDP + H(+). The protein operates within glycolipid biosynthesis; lipid IV(A) biosynthesis; lipid IV(A) from (3R)-3-hydroxytetradecanoyl-[acyl-carrier-protein] and UDP-N-acetyl-alpha-D-glucosamine: step 5/6. Its function is as follows. Condensation of UDP-2,3-diacylglucosamine and 2,3-diacylglucosamine-1-phosphate to form lipid A disaccharide, a precursor of lipid A, a phosphorylated glycolipid that anchors the lipopolysaccharide to the outer membrane of the cell. This chain is Lipid-A-disaccharide synthase, found in Blochmanniella floridana.